Here is a 233-residue protein sequence, read N- to C-terminus: Phosphoglycolate phosphatase (233 aa).

The active-site Nucleophile is the Asp9. Residues Asp9 and Asp11 each contribute to the Mg(2+) site. Position 154 (Lys154) interacts with substrate. Positions 177 and 181 each coordinate Mg(2+).

The protein belongs to the archaeal SPP-like hydrolase family. Requires Mg(2+) as cofactor.

It carries out the reaction 2-phosphoglycolate + H2O = glycolate + phosphate. In terms of biological role, catalyzes the dephosphorylation of 2-phosphoglycolate. The sequence is that of Phosphoglycolate phosphatase from Pyrococcus abyssi (strain GE5 / Orsay).